We begin with the raw amino-acid sequence, 383 residues long: uncharacterized protein (383 aa).

10 helical membrane passes run Leu-25–Ala-45, Ile-53–Val-73, Phe-103–Ala-123, Ile-139–Tyr-159, Gly-166–Leu-186, Trp-200–Tyr-220, Phe-238–Phe-258, Ile-272–Val-292, Leu-309–Leu-329, and Gly-332–Val-352.

This sequence belongs to the arsenical resistance-3 (ACR3) (TC 2.A.59) family.

Its subcellular location is the cell membrane. This is an uncharacterized protein from Synechocystis sp. (strain ATCC 27184 / PCC 6803 / Kazusa).